Here is a 279-residue protein sequence, read N- to C-terminus: NH(3)-dependent NAD(+) synthetase (279 aa).

Residue 46-53 (GISGGQDS) coordinates ATP. Residue aspartate 52 participates in Mg(2+) binding. Residue arginine 145 coordinates deamido-NAD(+). Threonine 165 lines the ATP pocket. Glutamate 170 contacts Mg(2+). Deamido-NAD(+) is bound by residues lysine 178 and aspartate 185. Residues lysine 194 and threonine 216 each contribute to the ATP site. 265-266 (HK) serves as a coordination point for deamido-NAD(+).

This sequence belongs to the NAD synthetase family. As to quaternary structure, homodimer.

The enzyme catalyses deamido-NAD(+) + NH4(+) + ATP = AMP + diphosphate + NAD(+) + H(+). It functions in the pathway cofactor biosynthesis; NAD(+) biosynthesis; NAD(+) from deamido-NAD(+) (ammonia route): step 1/1. Its function is as follows. Catalyzes the ATP-dependent amidation of deamido-NAD to form NAD. Uses ammonia as a nitrogen source. The polypeptide is NH(3)-dependent NAD(+) synthetase (Rhodococcus jostii (strain RHA1)).